The primary structure comprises 57 residues: uncharacterized protein (57 aa).

The segment at 1–57 (MDDTLPKQMTPTDTSPLKEEQAHCNNKTLENQPKNINDNKCTDSQNTDLQNTEPSKV) is disordered. A compositionally biased stretch (polar residues) spans 23–57 (HCNNKTLENQPKNINDNKCTDSQNTDLQNTEPSKV).

This is an uncharacterized protein from Ornithodoros (relapsing fever ticks).